An 85-amino-acid polypeptide reads, in one-letter code: MSKVKIELFTSPMCPHCPAAKRVVEEVANEMPDAVEVEYINVMENPQKAMEYGIMAVPTIVINGDVEFIGAPTKEALVEAIKKRL.

A Glutaredoxin domain is found at 1-85; the sequence is MSKVKIELFT…ALVEAIKKRL (85 aa). The cysteines at positions 14 and 17 are disulfide-linked.

Belongs to the glutaredoxin family.

Its subcellular location is the cytoplasm. In terms of biological role, acts to maintain redox homeostasis; functions as a protein disulfide reductase. This is Thioredoxin (trx) from Methanocaldococcus jannaschii (strain ATCC 43067 / DSM 2661 / JAL-1 / JCM 10045 / NBRC 100440) (Methanococcus jannaschii).